An 893-amino-acid chain; its full sequence is Sulfate permease 2 (893 aa).

Positions 1 to 25 are disordered; that stretch reads MSREGYPNFEEVEIPDFQETNNTVP. The Cytoplasmic segment spans residues 1-131; that stretch reads MSREGYPNFE…VFPIINWLPH (131 aa). Residues 132–152 form a helical membrane-spanning segment; sequence YNFSWFTADLIAGITIGCVLV. At 153-163 the chain is on the extracellular side; it reads PQSMSYAQVAT. The helical transmembrane segment at 164 to 184 threads the bilayer; that stretch reads LPAQYGLYSSFIGAYSYSFFA. The Cytoplasmic segment spans residues 185–188; sequence TSKD. Residues 189–209 form a helical membrane-spanning segment; that stretch reads VCIGPVAVMSLQTAKVIADVT. Topologically, residues 210 to 221 are extracellular; it reads AKYPDGDSAITG. Residues 222-242 traverse the membrane as a helical segment; it reads PVIATTLALLCGIISAAVGFL. Residues 243 to 244 are Cytoplasmic-facing; it reads RL. The chain crosses the membrane as a helical span at residues 245–265; the sequence is GFLVELISLNAVAGFMTGSAF. Residues 266 to 305 lie on the Extracellular side of the membrane; sequence NILWGQVPALMGYNSLVNTRAATYKVVIETLKHLPDTKLD. A helical membrane pass occupies residues 306–326; the sequence is AVFGLIPLFLLYVWKWWCGTY. Residues 327 to 350 lie on the Cytoplasmic side of the membrane; the sequence is GPRLNDRYNSKNPRLHKIIKWTYF. A helical membrane pass occupies residues 351 to 371; it reads YAQASRNGIIIIVFTCIGWAI. The Extracellular segment spans residues 372 to 399; it reads TRGKSKSERPISILGSVPSGLKEVGVFH. A helical membrane pass occupies residues 400–420; it reads VPPGLMSKLGPNLPASIIVLL. Over 421–443 the chain is Cytoplasmic; sequence LEHIAISKSFGRINDYKVVPDQE. A helical transmembrane segment spans residues 444–464; sequence LIAIGVSNLLGTFFNAYPATG. Over 465 to 483 the chain is Extracellular; it reads SFSRSALKAKCNVRTPLSG. The helical transmembrane segment at 484-504 threads the bilayer; the sequence is LFSGSCVLLALYCLTGAFFYI. Residues 505–532 lie on the Cytoplasmic side of the membrane; the sequence is PKATLSAVIIHAVSDLLASYQTTWNFWK. Residues 533 to 551 traverse the membrane as a helical segment; that stretch reads MNPLDFICFIVTVLITVFA. The Extracellular portion of the chain corresponds to 552–559; that stretch reads SIEDGIYF. Residues 560–580 form a helical membrane-spanning segment; that stretch reads AMCWSCAMLILKVAFPAGKFL. The Cytoplasmic segment spans residues 581-893; it reads GRVEVAEVTD…DIPDFAKWDI (313 aa). One can recognise an STAS domain in the interval 676-854; it reads DVQILPPPDG…SIVAGHTSYH (179 aa).

Belongs to the SLC26A/SulP transporter (TC 2.A.53) family.

The protein resides in the membrane. High affinity uptake of sulfate into the cell. This is Sulfate permease 2 (SUL2) from Saccharomyces cerevisiae (strain ATCC 204508 / S288c) (Baker's yeast).